A 323-amino-acid polypeptide reads, in one-letter code: Aspartate carbamoyltransferase catalytic subunit (323 aa).

Carbamoyl phosphate is bound by residues R65 and T66. An L-aspartate-binding site is contributed by K93. 3 residues coordinate carbamoyl phosphate: R115, H149, and Q152. Positions 182 and 237 each coordinate L-aspartate. Residues G278 and P279 each contribute to the carbamoyl phosphate site.

Belongs to the aspartate/ornithine carbamoyltransferase superfamily. ATCase family. As to quaternary structure, heterododecamer (2C3:3R2) of six catalytic PyrB chains organized as two trimers (C3), and six regulatory PyrI chains organized as three dimers (R2).

The enzyme catalyses carbamoyl phosphate + L-aspartate = N-carbamoyl-L-aspartate + phosphate + H(+). Its pathway is pyrimidine metabolism; UMP biosynthesis via de novo pathway; (S)-dihydroorotate from bicarbonate: step 2/3. Catalyzes the condensation of carbamoyl phosphate and aspartate to form carbamoyl aspartate and inorganic phosphate, the committed step in the de novo pyrimidine nucleotide biosynthesis pathway. This chain is Aspartate carbamoyltransferase catalytic subunit, found in Aromatoleum aromaticum (strain DSM 19018 / LMG 30748 / EbN1) (Azoarcus sp. (strain EbN1)).